The sequence spans 379 residues: Cytochrome b (379 aa).

The next 4 membrane-spanning stretches (helical) occupy residues 34-54, 78-99, 114-134, and 179-199; these read FGSL…LLAM, WLIR…YLHI, WNTG…GYVL, and FFAL…IHLT. Heme b-binding residues include histidine 84 and histidine 98. Residues histidine 183 and histidine 197 each contribute to the heme b site. Histidine 202 contributes to the a ubiquinone binding site. 4 consecutive transmembrane segments (helical) span residues 227–247, 289–309, 321–341, and 348–368; these read LKDI…AFFS, LGGV…PFLH, LSQV…WIGS, and FIII…ILFP.

Belongs to the cytochrome b family. The cytochrome bc1 complex contains 11 subunits: 3 respiratory subunits (MT-CYB, CYC1 and UQCRFS1), 2 core proteins (UQCRC1 and UQCRC2) and 6 low-molecular weight proteins (UQCRH/QCR6, UQCRB/QCR7, UQCRQ/QCR8, UQCR10/QCR9, UQCR11/QCR10 and a cleavage product of UQCRFS1). This cytochrome bc1 complex then forms a dimer. It depends on heme b as a cofactor.

It is found in the mitochondrion inner membrane. Component of the ubiquinol-cytochrome c reductase complex (complex III or cytochrome b-c1 complex) that is part of the mitochondrial respiratory chain. The b-c1 complex mediates electron transfer from ubiquinol to cytochrome c. Contributes to the generation of a proton gradient across the mitochondrial membrane that is then used for ATP synthesis. In Casuarius bennetti (Dwarf cassowary), this protein is Cytochrome b (MT-CYB).